The primary structure comprises 206 residues: RNA-binding protein (206 aa).

The segment at 87-206 (PRGMQRGNRR…SGAKSKRRPR (120 aa)) is disordered. The segment covering 109 to 132 (MPKDDSNDRKKAKTSKDRKVEKSS) has biased composition (basic and acidic residues).

The protein belongs to the phytoreovirus RNA-binding protein family.

The protein localises to the host cytoplasm. Constituent of viral factories. Binds to ssRNA and dsRNA. The protein is RNA-binding protein of Rice gall dwarf virus (RGDV).